The primary structure comprises 1076 residues: Serine/threonine-protein phosphatase 6 regulatory ankyrin repeat subunit C (1076 aa).

ANK repeat units lie at residues 7 to 36 (TDQP…NINV), 40 to 69 (ERRT…NVNA), 73 to 102 (LWLT…DVNA), 106 to 135 (LWQT…SLNV), 139 to 168 (SGRS…SLNV), 172 to 201 (KERQ…DLGC), 205 to 234 (KGYG…EIDE), 238 to 267 (FGNT…NVNQ), 271 to 301 (KGFT…DVNY), 305 to 334 (EGKS…EIDC), 338 to 367 (FGNT…DTAR), 371 to 400 (HDMF…LYSI), 422 to 451 (LGRT…DLRR), 455 to 484 (FGRT…GVNE), 488 to 545 (KGCS…DPSL), 549 to 579 (QGYT…CLED), 584 to 613 (IPVS…NLDV), 617 to 646 (KGRT…SALI), 651 to 680 (RKWT…RADI), 687 to 716 (YGQT…TADA), 720 to 749 (RGRT…FVLC), 753 to 782 (KGRT…STDP), 790 to 819 (SGYS…FSYL), 822 to 852 (NPFT…KIVN), 857 to 886 (KGRT…EVNA), 890 to 920 (TGRT…DLTV), 924 to 953 (NKNT…DLGL), and 960 to 989 (ALQM…TVLA). Residues 502 to 514 (YRRAEPHTPSSHD) are compositionally biased toward basic and acidic residues. The tract at residues 502 to 522 (YRRAEPHTPSSHDAEEDEPLK) is disordered. Phosphoserine occurs at positions 1028 and 1075.

Protein phosphatase 6 (PP6) holoenzyme is proposed to be a heterotrimeric complex formed by the catalytic subunit, a SAPS domain-containing subunit (PP6R) and an ankyrin repeat-domain containing regulatory subunit (ARS). Interacts with PPP6R1.

Functionally, putative regulatory subunit of protein phosphatase 6 (PP6) that may be involved in the recognition of phosphoprotein substrates. This is Serine/threonine-protein phosphatase 6 regulatory ankyrin repeat subunit C (ANKRD52) from Homo sapiens (Human).